The following is a 254-amino-acid chain: 3-deoxy-manno-octulosonate cytidylyltransferase (254 aa).

Belongs to the KdsB family.

The protein resides in the cytoplasm. The catalysed reaction is 3-deoxy-alpha-D-manno-oct-2-ulosonate + CTP = CMP-3-deoxy-beta-D-manno-octulosonate + diphosphate. It functions in the pathway nucleotide-sugar biosynthesis; CMP-3-deoxy-D-manno-octulosonate biosynthesis; CMP-3-deoxy-D-manno-octulosonate from 3-deoxy-D-manno-octulosonate and CTP: step 1/1. It participates in bacterial outer membrane biogenesis; lipopolysaccharide biosynthesis. Its function is as follows. Activates KDO (a required 8-carbon sugar) for incorporation into bacterial lipopolysaccharide in Gram-negative bacteria. In Pseudoalteromonas atlantica (strain T6c / ATCC BAA-1087), this protein is 3-deoxy-manno-octulosonate cytidylyltransferase.